The sequence spans 156 residues: Ribosomal RNA large subunit methyltransferase H (156 aa).

Residues leucine 73, glycine 104, and leucine 123–leucine 128 each bind S-adenosyl-L-methionine.

This sequence belongs to the RNA methyltransferase RlmH family. As to quaternary structure, homodimer.

The protein resides in the cytoplasm. It carries out the reaction pseudouridine(1915) in 23S rRNA + S-adenosyl-L-methionine = N(3)-methylpseudouridine(1915) in 23S rRNA + S-adenosyl-L-homocysteine + H(+). Its function is as follows. Specifically methylates the pseudouridine at position 1915 (m3Psi1915) in 23S rRNA. The chain is Ribosomal RNA large subunit methyltransferase H from Serratia proteamaculans (strain 568).